Reading from the N-terminus, the 396-residue chain is S-adenosylmethionine synthase (396 aa).

Residue His-16 participates in ATP binding. Residue Asp-18 participates in Mg(2+) binding. Residue Glu-44 coordinates K(+). L-methionine is bound by residues Glu-57 and Gln-100. The interval 100–110 (QSPDIAQGVDD) is flexible loop. ATP is bound by residues 174–176 (DAK), 241–242 (RF), Asp-250, 256–257 (RK), Ala-273, and Lys-277. Asp-250 is an L-methionine binding site. L-methionine is bound at residue Lys-281.

It belongs to the AdoMet synthase family. Homotetramer; dimer of dimers. Mg(2+) serves as cofactor. The cofactor is K(+).

It localises to the cytoplasm. The catalysed reaction is L-methionine + ATP + H2O = S-adenosyl-L-methionine + phosphate + diphosphate. It participates in amino-acid biosynthesis; S-adenosyl-L-methionine biosynthesis; S-adenosyl-L-methionine from L-methionine: step 1/1. Catalyzes the formation of S-adenosylmethionine (AdoMet) from methionine and ATP. The overall synthetic reaction is composed of two sequential steps, AdoMet formation and the subsequent tripolyphosphate hydrolysis which occurs prior to release of AdoMet from the enzyme. The sequence is that of S-adenosylmethionine synthase from Pediococcus pentosaceus (strain ATCC 25745 / CCUG 21536 / LMG 10740 / 183-1w).